The sequence spans 329 residues: Tagatose 1,6-diphosphate aldolase 2 (329 aa).

The protein belongs to the aldolase LacD family.

The enzyme catalyses D-tagatofuranose 1,6-bisphosphate = D-glyceraldehyde 3-phosphate + dihydroxyacetone phosphate. The protein operates within carbohydrate metabolism; D-tagatose 6-phosphate degradation; D-glyceraldehyde 3-phosphate and glycerone phosphate from D-tagatose 6-phosphate: step 2/2. The sequence is that of Tagatose 1,6-diphosphate aldolase 2 (lacD2) from Streptococcus mutans serotype c (strain ATCC 700610 / UA159).